We begin with the raw amino-acid sequence, 262 residues long: Tetratricopeptide repeat protein 33 (262 aa).

TPR repeat units follow at residues 59 to 92, 93 to 126, and 127 to 160; these read SKQLKDEGASLAENKRYREAIQKWDEALQLTPND, ATLYEMKSQVLMSLHEMFPAVHAAEMAVQQNPHS, and WESWQTLGRAQLGLGEIILAIRSFQVALHIYPMN. Position 197 is a phosphoserine (S197). The residue at position 251 (T251) is a Phosphothreonine.

The sequence is that of Tetratricopeptide repeat protein 33 (TTC33) from Homo sapiens (Human).